The chain runs to 751 residues: Semaphorin-3C (751 aa).

The first 20 residues, Met-1–Arg-20, serve as a signal peptide directing secretion. The region spanning Arg-28 to Leu-511 is the Sema domain. Residue Asn-81 is glycosylated (N-linked (GlcNAc...) asparagine). A disulfide bond links Cys-101 and Cys-112. N-linked (GlcNAc...) asparagine glycosylation occurs at Asn-123. Cys-130 and Cys-139 are joined by a disulfide. N-linked (GlcNAc...) asparagine glycans are attached at residues Asn-252 and Asn-268. 2 cysteine pairs are disulfide-bonded: Cys-266–Cys-378 and Cys-290–Cys-338. N-linked (GlcNAc...) asparagine glycosylation occurs at Asn-465. Cys-514 and Cys-532 are oxidised to a cystine. One can recognise an Ig-like C2-type domain in the interval Ala-571 to Ala-655. 2 N-linked (GlcNAc...) asparagine glycosylation sites follow: Asn-585 and Asn-586. Residues Cys-643 and Cys-709 are joined by a disulfide bond.

This sequence belongs to the semaphorin family. Interacts with PLXND1.

The protein resides in the secreted. Its function is as follows. Binds to plexin family members and plays an important role in the regulation of developmental processes. Required for normal cardiovascular development during embryogenesis. Functions as attractant for growing axons, and thereby plays an important role in axon growth and axon guidance. This chain is Semaphorin-3C (Sema3c), found in Mus musculus (Mouse).